A 297-amino-acid chain; its full sequence is Protoheme IX farnesyltransferase (297 aa).

9 consecutive transmembrane segments (helical) span residues 26–46 (VTQL…PGMV), 48–68 (YPVL…AFAV), 96–116 (LHII…LWNF), 120–140 (LTMW…TWLL), 147–167 (NIVI…AAVT), 174–194 (AWHL…ALAL), 218–238 (LLNI…PYIY), 245–265 (YLIS…ALFI), and 276–296 (FRFS…DHYF).

The protein belongs to the UbiA prenyltransferase family. Protoheme IX farnesyltransferase subfamily.

Its subcellular location is the cell inner membrane. The enzyme catalyses heme b + (2E,6E)-farnesyl diphosphate + H2O = Fe(II)-heme o + diphosphate. Its pathway is porphyrin-containing compound metabolism; heme O biosynthesis; heme O from protoheme: step 1/1. Its function is as follows. Converts heme B (protoheme IX) to heme O by substitution of the vinyl group on carbon 2 of heme B porphyrin ring with a hydroxyethyl farnesyl side group. In Polynucleobacter necessarius subsp. necessarius (strain STIR1), this protein is Protoheme IX farnesyltransferase.